The primary structure comprises 32 residues: SLGGFLKGVGKALAGVGKMVADQFGNLLQAGQ.

Residue Q32 is modified to Glutamine amide.

In terms of tissue distribution, expressed by the skin glands.

The protein resides in the secreted. Functionally, antimicrobial peptide. The polypeptide is Dermatoxin-J2 (Phasmahyla jandaia (Jandaia leaf frog)).